The primary structure comprises 142 residues: Large ribosomal subunit protein uL13c (142 aa).

This sequence belongs to the universal ribosomal protein uL13 family. As to quaternary structure, part of the 50S ribosomal subunit.

Its subcellular location is the plastid. The protein resides in the chloroplast. This is Large ribosomal subunit protein uL13c from Pyropia yezoensis (Susabi-nori).